We begin with the raw amino-acid sequence, 134 residues long: Holo-[acyl-carrier-protein] synthase (134 aa).

Residues D8 and E57 each contribute to the Mg(2+) site.

This sequence belongs to the P-Pant transferase superfamily. AcpS family. The cofactor is Mg(2+).

It localises to the cytoplasm. The enzyme catalyses apo-[ACP] + CoA = holo-[ACP] + adenosine 3',5'-bisphosphate + H(+). Its function is as follows. Transfers the 4'-phosphopantetheine moiety from coenzyme A to a Ser of acyl-carrier-protein. The sequence is that of Holo-[acyl-carrier-protein] synthase from Rhizobium etli (strain ATCC 51251 / DSM 11541 / JCM 21823 / NBRC 15573 / CFN 42).